The primary structure comprises 689 residues: Glycine--tRNA ligase beta subunit (689 aa).

The protein belongs to the class-II aminoacyl-tRNA synthetase family. As to quaternary structure, tetramer of two alpha and two beta subunits.

The protein localises to the cytoplasm. It carries out the reaction tRNA(Gly) + glycine + ATP = glycyl-tRNA(Gly) + AMP + diphosphate. The polypeptide is Glycine--tRNA ligase beta subunit (Escherichia coli O139:H28 (strain E24377A / ETEC)).